A 328-amino-acid polypeptide reads, in one-letter code: Putative glycosyltransferase 41 (328 aa).

This sequence belongs to the glycosyltransferase group 1 family. Glycosyltransferase 4 subfamily.

This Sulfolobus islandicus filamentous virus (isolate Iceland/Hveragerdi) (SIFV) protein is Putative glycosyltransferase 41 (SIFV0041).